The sequence spans 181 residues: Acireductone dioxygenase (181 aa).

4 residues coordinate Fe(2+): His97, His99, Glu103, and His141. His97, His99, Glu103, and His141 together coordinate Ni(2+).

It belongs to the acireductone dioxygenase (ARD) family. Monomer. Requires Fe(2+) as cofactor. The cofactor is Ni(2+).

It catalyses the reaction 1,2-dihydroxy-5-(methylsulfanyl)pent-1-en-3-one + O2 = 3-(methylsulfanyl)propanoate + CO + formate + 2 H(+). It carries out the reaction 1,2-dihydroxy-5-(methylsulfanyl)pent-1-en-3-one + O2 = 4-methylsulfanyl-2-oxobutanoate + formate + 2 H(+). It functions in the pathway amino-acid biosynthesis; L-methionine biosynthesis via salvage pathway; L-methionine from S-methyl-5-thio-alpha-D-ribose 1-phosphate: step 5/6. Functionally, catalyzes 2 different reactions between oxygen and the acireductone 1,2-dihydroxy-3-keto-5-methylthiopentene (DHK-MTPene) depending upon the metal bound in the active site. Fe-containing acireductone dioxygenase (Fe-ARD) produces formate and 2-keto-4-methylthiobutyrate (KMTB), the alpha-ketoacid precursor of methionine in the methionine recycle pathway. Ni-containing acireductone dioxygenase (Ni-ARD) produces methylthiopropionate, carbon monoxide and formate, and does not lie on the methionine recycle pathway. This is Acireductone dioxygenase from Pseudomonas syringae pv. syringae (strain B728a).